The sequence spans 522 residues: E3 ubiquitin-protein ligase TRIM65 (522 aa).

Alanine 2 bears the N-acetylalanine mark. Residues 13 to 52 (CSICLGRYRDPVTLPCGHSFCGNCIQDSWRSCEKSCPECR) form an RING-type zinc finger. A B box-type zinc finger spans residues 92–134 (SHSARCLRHGRPLEFFCRTEGLCVCSACTVHDCSHHERALLDV). The stretch at 141 to 229 (DQLRARVLVT…QRLTDHLRAL (89 aa)) forms a coiled coil. Serine 187 is subject to Phosphoserine. The region spanning 316 to 509 (APVPSAVCPL…LTLCHQPEAT (194 aa)) is the B30.2/SPRY domain.

This sequence belongs to the TRIM/RBCC family. As to quaternary structure, homo-multimerizes. Interacts with ARRDC4.

The protein localises to the cytoplasm. The enzyme catalyses S-ubiquitinyl-[E2 ubiquitin-conjugating enzyme]-L-cysteine + [acceptor protein]-L-lysine = [E2 ubiquitin-conjugating enzyme]-L-cysteine + N(6)-ubiquitinyl-[acceptor protein]-L-lysine.. It participates in protein modification; protein ubiquitination. E3 ubiquitin ligase that plays a role in several processes including innate immnity, autophagy or inflammation. Negatively regulates miRNAs by modulating the ubiquitination and stability of TNRC6A, a protein involved in RNA-mediated gene silencing by both micro-RNAs (miRNAs) and short interfering RNAs. This ubiquitination results in the suppressed expression of miR-138-5p leading to increased autophagy. Upon enteroviral infection, promotes 'Lys-63'-mediated ubiquitination activation of IFIH1/MDA5 leading to innate signaling cascade. Mechanistically, selectively recognizes MDA5 filaments that occur on dsRNAs. Also plays a role in limitation of inflammation through different mechanisms. First, promotes 'Lys-48'-mediated ubiquitination of VCAM1 leading to its degradation and limitation of LPS-induced lung inflammation. In addition, negatively regulates inflammasome activation by promoting 'lys48'-linked ubiquitination of NLRP3 which is critical for the inhibition of NLRP3 inflammasome activation in resting macrophages. The sequence is that of E3 ubiquitin-protein ligase TRIM65 (Trim65) from Mus musculus (Mouse).